The chain runs to 91 residues: MYGKIIFVLLLSEIVSISALSTTEVAMHTSTSSSVTKSYISSQTNGETGQLVHRFTVPAPVVIILIILCVMAGIIGTILLISYSIRRLIKA.

A signal peptide spans 1 to 19 (MYGKIIFVLLLSEIVSISA). Over 20-59 (LSTTEVAMHTSTSSSVTKSYISSQTNGETGQLVHRFTVPA) the chain is Extracellular. O-linked (GalNAc...) threonine glycosylation occurs at T36. S38 carries O-linked (GalNAc...) serine glycosylation. Residues 60–81 (PVVIILIILCVMAGIIGTILLI) form a helical membrane-spanning segment. Topologically, residues 82–91 (SYSIRRLIKA) are cytoplasmic.

Belongs to the glycophorin-A family. In terms of assembly, component of the ankyrin-1 complex in the erythrocyte, composed of ANK1, RHCE, RHAG, SLC4A1, EPB42, GYPA, GYPB and AQP1. Interacts (via the N-terminal) with RHAG; this interaction bridges the (RHAG)2(RHCE) heterotrimer with the SLC4A1 Band 3 I dimer complexed with GYPA. The N-terminal extracellular domain is heavily glycosylated on serine and threonine residues.

The protein resides in the cell membrane. Component of the ankyrin-1 complex, a multiprotein complex involved in the stability and shape of the erythrocyte membrane. In Homo sapiens (Human), this protein is Glycophorin-B.